We begin with the raw amino-acid sequence, 193 residues long: Interleukin-18 (193 aa).

A propeptide spanning residues 1–36 (MAAEPVEDNCINFVAMKFIDNTLYFIAEDDENLESD) is cleaved from the precursor.

It belongs to the IL-1 family. In terms of assembly, forms a ternary complex with ligand-binding receptor subunit IL18R1 and signaling receptor subunit IL18RAP at the plasma membrane. Mature IL18 first binds to IL18R1 forming a low affinity binary complex, which then interacts with IL18RAP to form a high affinity ternary complex that signals inside the cell. Interacts with cargo receptor TMED10; the interaction mediates the translocation from the cytoplasm into the ERGIC (endoplasmic reticulum-Golgi intermediate compartment) and thereby secretion. In terms of processing, the pro-IL-18 precursor is processed by CASP1, CASP4 or CASP5 to yield its mature, active form. The pro-IL-18 precursor features autoinhibitory interactions between the propeptide and the post-cleavage-site region, preventing recognition by the IL18R1 receptor. Processing by CASP1, CASP4 or CASP5 induces conformational changes to generate critical receptor-binding sites. The mature form is then secreted and released in the extracellular milieu by passing through the gasdermin-D (GSDMD) pore. In contrast, cleavage by CASP3 inactivates IL18. As to expression, expressed in ovarian carcinoma but undetectable in normal ovarian epithelial cells. Resistant to proteolytic activation by caspase-1 and -4.

The protein localises to the cytoplasm. It localises to the cytosol. It is found in the secreted. Its function is as follows. Pro-inflammatory cytokine primarily involved in epithelial barrier repair, polarized T-helper 1 (Th1) cell and natural killer (NK) cell immune responses. Upon binding to IL18R1 and IL18RAP, forms a signaling ternary complex which activates NF-kappa-B, triggering synthesis of inflammatory mediators. Synergizes with IL12/interleukin-12 to induce IFNG synthesis from T-helper 1 (Th1) cells and natural killer (NK) cells. Involved in transduction of inflammation downstream of pyroptosis: its mature form is specifically released in the extracellular milieu by passing through the gasdermin-D (GSDMD) pore. The sequence is that of Interleukin-18 from Homo sapiens (Human).